The chain runs to 181 residues: ATP synthase subunit b, chloroplastic (181 aa).

Residues 31–50 form a helical membrane-spanning segment; the sequence is NVLNIAILLSGVVYLGRNFL.

The protein belongs to the ATPase B chain family. As to quaternary structure, F-type ATPases have 2 components, F(1) - the catalytic core - and F(0) - the membrane proton channel. F(1) has five subunits: alpha(3), beta(3), gamma(1), delta(1), epsilon(1). F(0) has four main subunits: a(1), b(1), b'(1) and c(10-14). The alpha and beta chains form an alternating ring which encloses part of the gamma chain. F(1) is attached to F(0) by a central stalk formed by the gamma and epsilon chains, while a peripheral stalk is formed by the delta, b and b' chains.

It localises to the plastid. Its subcellular location is the chloroplast thylakoid membrane. Functionally, f(1)F(0) ATP synthase produces ATP from ADP in the presence of a proton or sodium gradient. F-type ATPases consist of two structural domains, F(1) containing the extramembraneous catalytic core and F(0) containing the membrane proton channel, linked together by a central stalk and a peripheral stalk. During catalysis, ATP synthesis in the catalytic domain of F(1) is coupled via a rotary mechanism of the central stalk subunits to proton translocation. Its function is as follows. Component of the F(0) channel, it forms part of the peripheral stalk, linking F(1) to F(0). In Rhodomonas salina (Cryptomonas salina), this protein is ATP synthase subunit b, chloroplastic.